We begin with the raw amino-acid sequence, 155 residues long: RING finger protein 122 (155 aa).

A helical membrane pass occupies residues 40–60 (VIFGTGIFVFMLSLIFCCYFI). The RING-type; atypical zinc-finger motif lies at 93 to 134 (CAVCLEDFKGKDELGVLPCQHAFHRKCLVKWLEVRCVCPMCN).

In terms of tissue distribution, widely expressed in several tissues and cell lines.

The protein localises to the golgi apparatus. The protein resides in the endoplasmic reticulum. It is found in the membrane. In terms of biological role, may induce necrosis and apoptosis. May play a role in cell viability. The polypeptide is RING finger protein 122 (RNF122) (Homo sapiens (Human)).